We begin with the raw amino-acid sequence, 550 residues long: Solute carrier family 22 member 11 (550 aa).

The Cytoplasmic portion of the chain corresponds to 1-10; that stretch reads MAFSKLLEQA. Residues 11-31 traverse the membrane as a helical segment; it reads GGVGLFQTLQVLTFILPCLMI. At 32–142 the chain is on the extracellular side; sequence PSQMLLENFS…DLVCSSQGLK (111 aa). Residues Asn-39, Asn-56, and Asn-99 are each glycosylated (N-linked (GlcNAc...) asparagine). The chain crosses the membrane as a helical span at residues 143 to 163; the sequence is PLSQSIFMSGILVGSFIWGLL. At 164 to 174 the chain is on the cytoplasmic side; that stretch reads SYRFGRKPMLS. Residues 175–195 traverse the membrane as a helical segment; the sequence is WCCLQLAVAGTSTIFAPTFVI. Residues 196–200 lie on the Extracellular side of the membrane; the sequence is YCGLR. Residues 201-221 traverse the membrane as a helical segment; that stretch reads FVAAFGMAGIFLSSLTLMVEW. Residues 222-231 lie on the Cytoplasmic side of the membrane; that stretch reads TTTSRRAVTM. A helical membrane pass occupies residues 232 to 252; sequence TVVGCAFSAGQAALGGLAFAL. At 253–256 the chain is on the extracellular side; it reads RDWR. Residues 257-277 traverse the membrane as a helical segment; it reads TLQLAASVPFFAISLISWWLP. Topologically, residues 278–346 are cytoplasmic; that stretch reads ESARWLIIKG…FCVPVLRWRS (69 aa). A helical membrane pass occupies residues 347 to 367; it reads CAMLVVNFSLLISYYGLVFDL. The Extracellular segment spans residues 368–378; it reads QSLGRDIFLLQ. The helical transmembrane segment at 379–399 threads the bilayer; the sequence is ALFGAVDFLGRATTALLLSFL. At 400–402 the chain is on the cytoplasmic side; sequence GRR. The helical transmembrane segment at 403 to 423 threads the bilayer; that stretch reads TIQAGSQAMAGLAILANMLVP. The Extracellular segment spans residues 424-430; the sequence is QDLQTLR. A helical membrane pass occupies residues 431–451; sequence VVFAVLGKGCFGISLTCLTIY. Topologically, residues 452–463 are cytoplasmic; it reads KAELFPTPVRMT. A helical transmembrane segment spans residues 464–484; sequence ADGILHTVGRLGAMMGPLILM. At 485–490 the chain is on the extracellular side; sequence SRQALP. The helical transmembrane segment at 491–511 threads the bilayer; sequence LLPPLLYGVISIASSLVVLFF. The Cytoplasmic segment spans residues 512–550; that stretch reads LPETQGLPLPDTIQDLESQKSTAAQGNRQEAVTVESTSL. Residues 531–550 form a disordered region; that stretch reads KSTAAQGNRQEAVTVESTSL.

This sequence belongs to the major facilitator (TC 2.A.1) superfamily. Organic cation transporter (TC 2.A.1.19) family. N-glycosylated. Contains several complex-type N-glycans. Expressed in placental trophoblasts, syncytiotrophoblast and cytotrophoblast. Also located in the proximal tubules in kidneys.

Its subcellular location is the cell membrane. The protein resides in the apical cell membrane. It is found in the basal cell membrane. It catalyses the reaction estrone 3-sulfate(out) + glutarate(in) = estrone 3-sulfate(in) + glutarate(out). It carries out the reaction dehydroepiandrosterone 3-sulfate(out) = dehydroepiandrosterone 3-sulfate(in). The enzyme catalyses prostaglandin F2alpha(out) = prostaglandin F2alpha(in). The catalysed reaction is prostaglandin E2(out) = prostaglandin E2(in). Its function is as follows. Antiporter that mediates the transport of conjugated steroids and other specific organic anions at the basal membrane of syncytiotrophoblast and at the apical membrane of proximal tubule epithelial cells, in exchange for anionic compounds. May be responsible for placental absorption of fetal-derived steroid sulfates such as estrone sulfate (E1S) and the steroid hormone precursor dehydroepiandrosterone sulfate (DHEA-S), as well as clearing waste products and xenobiotics from the fetus. Maybe also be involved in placental urate homeostasis. Facilitates the renal reabsorption of organic anions such as urate and derived steroid sulfates. Organic anion glutarate acts as conteranion for E1S renal uptake. Possible transport mode may also include DHEA-S/E1S exchange. Also interacts with inorganic anions such as chloride and hydroxyl ions, therefore possible transport modes may include E1S/Cl(-), E1S/OH(-), urate/Cl(-) and urate/OH(-). Also mediates the transport of prostaglandin E2 (PGE2) and prostaglandin F2-alpha (PGF2-alpha) and may be involved in their renal excretion. Also able to uptake anionic drugs, diuretics, bile salts and ochratoxin A. Mediates the unidirectional efflux of glutamate and aspartate. Glutamate efflux down its transmembrane gradient may drive SLC22A11/OAT4-mediated placental uptake of E1S. In Homo sapiens (Human), this protein is Solute carrier family 22 member 11.